Reading from the N-terminus, the 356-residue chain is MSPCGRARRHTSRGAMAVLAWKFPRTRLPVGASALCVVVLCWLYVFPVYRLPDEKEIVQGVLQQGTAWRRNRTAAGIFRKQMEDCCDPAHLFAMTKMNAPMGKSLWYDGEFLYSFTIDNSTYSLFPQATPFQLPLKKCAVVGNGGILKKSGCGRQIDEADFVMRCNLPPLSSEYTKDVGSKSHLVTANPSIIRQRFQNLLWSRKTFVDHMKVYNHSYIYMPAFSMKTGTEPSLRVYYTLSDVGANQTVLFANPNFLRSIGKFWKSRGIHAKRLSTGLFLVSAALGLCEEVAIYGFWPFSVNMHEQPISHHYYDNVLPFSGFHAMPEEFLQLWYLHKIGALRMQLDPCEDNSLQPTS.

Over 1 to 29 (MSPCGRARRHTSRGAMAVLAWKFPRTRLP) the chain is Cytoplasmic. Residues 30–48 (VGASALCVVVLCWLYVFPV) traverse the membrane as a helical; Signal-anchor for type II membrane protein segment. At 49 to 356 (YRLPDEKEIV…CEDNSLQPTS (308 aa)) the chain is on the lumenal side. Asparagine 71 and asparagine 119 each carry an N-linked (GlcNAc...) asparagine glycan. Cysteine 138 and cysteine 287 form a disulfide bridge. CMP-N-acetyl-beta-neuraminate is bound by residues asparagine 143 and asparagine 166. 2 N-linked (GlcNAc...) asparagine glycosylation sites follow: asparagine 214 and asparagine 245. The CMP-N-acetyl-beta-neuraminate site is built by serine 274, threonine 275, glycine 276, tryptophan 296, and histidine 310.

Belongs to the glycosyltransferase 29 family.

It is found in the golgi apparatus membrane. It carries out the reaction an N-acetyl-alpha-neuraminyl-(2-&gt;3)-beta-D-galactosyl derivative + CMP-N-acetyl-beta-neuraminate = an N-acetyl-alpha-neuraminyl-(2-&gt;8)-N-acetyl-alpha-neuraminyl-(2-&gt;3)-beta-D-galactosyl derivative + CMP + H(+). The enzyme catalyses a ganglioside GM3 (d18:1(4E)) + CMP-N-acetyl-beta-neuraminate = a ganglioside GD3 (d18:1(4E)) + CMP + H(+). The catalysed reaction is a ganglioside GD3 (d18:1(4E)) + CMP-N-acetyl-beta-neuraminate = a ganglioside GT3 (d18:1(4E)) + CMP + H(+). It catalyses the reaction a ganglioside GD1a (d18:1(4E)) + CMP-N-acetyl-beta-neuraminate = a ganglioside GT1a (d18:1(4E)) + CMP + H(+). It carries out the reaction a ganglioside GT1b (d18:1(4E)) + CMP-N-acetyl-beta-neuraminate = a ganglioside GQ1b (d18:1(4E)) + CMP + H(+). The enzyme catalyses a ganglioside GM1b (d18:1(4E)) + CMP-N-acetyl-beta-neuraminate = a ganglioside GD1c (d18:1(4E)) + CMP + H(+). The catalysed reaction is a ganglioside GD3 + CMP-N-acetyl-beta-neuraminate = a ganglioside GT3 + CMP + H(+). It catalyses the reaction [alpha-N-acetylneuraminyl-(2-&gt;8)](n)-alpha-N-acetylneuraminyl-(2-&gt;8)-alpha-N-acetylneuraminyl-(2-&gt;3)-beta-D-galactosyl-(1-&gt;4)-beta-D-glucosyl-(1&lt;-&gt;1)-ceramide + CMP-N-acetyl-beta-neuraminate = [alpha-N-acetylneuraminyl-(2-&gt;8)](n+1)-alpha-N-acetylneuraminyl-(2-&gt;8)-alpha-N-acetylneuraminyl-(2-&gt;3)-beta-D-galactosyl-(1-&gt;4)-beta-D-glucosyl-(1&lt;-&gt;1)-ceramide + CMP + H(+). Its pathway is protein modification; protein glycosylation. The protein operates within lipid metabolism; sphingolipid metabolism. Functionally, catalyzes the addition of sialic acid in alpha 2,8-linkage to the sialic acid moiety of the ganglioside GM3 to form ganglioside GD3; gangliosides are a subfamily of complex glycosphingolipds that contain one or more residues of sialic acid. Can catalyze the addition of a second alpha-2,8- sialic acid to GD3 to form GT3. Can use GM1b, GD1a and GT1b as acceptor substrates to synthesize GD1c, GT1a and GQ1b respectively. In Bos taurus (Bovine), this protein is Alpha-N-acetylneuraminide alpha-2,8-sialyltransferase.